Consider the following 163-residue polypeptide: 3-hydroxyacyl-[acyl-carrier-protein] dehydratase FabZ (163 aa).

Residue histidine 58 is part of the active site.

This sequence belongs to the thioester dehydratase family. FabZ subfamily.

Its subcellular location is the cytoplasm. The enzyme catalyses a (3R)-hydroxyacyl-[ACP] = a (2E)-enoyl-[ACP] + H2O. Functionally, involved in unsaturated fatty acids biosynthesis. Catalyzes the dehydration of short chain beta-hydroxyacyl-ACPs and long chain saturated and unsaturated beta-hydroxyacyl-ACPs. This chain is 3-hydroxyacyl-[acyl-carrier-protein] dehydratase FabZ, found in Francisella philomiragia subsp. philomiragia (strain ATCC 25017 / CCUG 19701 / FSC 153 / O#319-036).